Consider the following 51-residue polypeptide: Sperm protamine P1 (51 aa).

2 disulfides stabilise this stretch: Cys-7–Cys-15 and Cys-40–Cys-48.

Belongs to the protamine P1 family. Cross-linked by interchain disulfide bonds around the DNA-helix. As to expression, testis.

The protein resides in the nucleus. It is found in the chromosome. In terms of biological role, protamines substitute for histones in the chromatin of sperm during the haploid phase of spermatogenesis. They compact sperm DNA into a highly condensed, stable and inactive complex. The chain is Sperm protamine P1 (PRM1) from Capra hircus (Goat).